We begin with the raw amino-acid sequence, 383 residues long: Succinyl-diaminopimelate desuccinylase (383 aa).

Histidine 69 contributes to the Zn(2+) binding site. Residue aspartate 71 is part of the active site. Aspartate 103 serves as a coordination point for Zn(2+). Residue glutamate 137 is the Proton acceptor of the active site. 3 residues coordinate Zn(2+): glutamate 138, glutamate 166, and histidine 357.

This sequence belongs to the peptidase M20A family. DapE subfamily. As to quaternary structure, homodimer. Zn(2+) serves as cofactor. It depends on Co(2+) as a cofactor.

It carries out the reaction N-succinyl-(2S,6S)-2,6-diaminopimelate + H2O = (2S,6S)-2,6-diaminopimelate + succinate. It functions in the pathway amino-acid biosynthesis; L-lysine biosynthesis via DAP pathway; LL-2,6-diaminopimelate from (S)-tetrahydrodipicolinate (succinylase route): step 3/3. In terms of biological role, catalyzes the hydrolysis of N-succinyl-L,L-diaminopimelic acid (SDAP), forming succinate and LL-2,6-diaminopimelate (DAP), an intermediate involved in the bacterial biosynthesis of lysine and meso-diaminopimelic acid, an essential component of bacterial cell walls. This chain is Succinyl-diaminopimelate desuccinylase, found in Rickettsia typhi (strain ATCC VR-144 / Wilmington).